We begin with the raw amino-acid sequence, 497 residues long: Solute carrier family 2, facilitated glucose transporter member 6 (497 aa).

The Cytoplasmic segment spans residues 1–36 (MQEPLLRTEGLDYDTFPEVPATPGERERAGALKNRR). The short motif at 5 to 6 (LL) is the Dileucine internalization motif element. The helical transmembrane segment at 37–57 (VFLATFAAVLGNFSFGYALVY) threads the bilayer. Over 58–80 (TSPVIPELKLSSDPALHLDKIQA) the chain is Extracellular. The chain crosses the membrane as a helical span at residues 81–101 (SWFGSVFTLGAAAGGLSAMLL). Residues 102 to 115 (NDLLGRKLSIMFSA) are Cytoplasmic-facing. A helical transmembrane segment spans residues 116–136 (VPSAIGYAIMAGARGLWMLLL). At 137 to 138 (GR) the chain is on the extracellular side. Residues 139-159 (MLTGFAGGLTAACIPVYVSEI) traverse the membrane as a helical segment. Residues 160-171 (APPDVRGALGAT) lie on the Cytoplasmic side of the membrane. A helical membrane pass occupies residues 172–192 (PQLMAVFGSLSLYALGLLLPW). Gln-173 serves as a coordination point for a D-hexose. Residue Arg-193 is a topological domain, extracellular. Residues 194 to 214 (WLAVAGEGPVLIMILLLSFMP) traverse the membrane as a helical segment. The Cytoplasmic portion of the chain corresponds to 215–273 (NSPRFLLSKSRDEEALQALTWLRADSEVHWEFEQIQDNVRRQSSRVSWAEAREPRVYRP). Residues 274-294 (VLIAVLMRFLQQLTGITPILV) traverse the membrane as a helical segment. 284-285 (QQ) provides a ligand contact to a D-hexose. Residues 295–312 (YLQTIFDNTSVVLPSQQD) lie on the Extracellular side of the membrane. N-linked (GlcNAc...) asparagine glycosylation occurs at Asn-302. The helical transmembrane segment at 313-333 (AAIVGAVRLLSVLIAAVTMDL) threads the bilayer. Topologically, residues 334–337 (AGRK) are cytoplasmic. Residues 338–358 (VLLYVSASVMFAANLTLGLYV) form a helical membrane-spanning segment. Over 359 to 385 (QFVPRPLTPNSTVEIVTLGDTAFNYLT) the chain is Extracellular. The N-linked (GlcNAc...) asparagine glycan is linked to Asn-368. Residues 386-406 (LIPLLATMLFIMGYAMGWGPI) form a helical membrane-spanning segment. Topologically, residues 407-425 (TWLLMSEVLPLRARGVASG) are cytoplasmic. Residue Trp-408 participates in a D-hexose binding. Residues 426–446 (LCVLVSWLTAFVLTNYFLLAV) form a helical membrane-spanning segment. Residue Asn-447 is a topological domain, extracellular. The chain crosses the membrane as a helical span at residues 448–468 (AFGLQVPFFFFSAICLLSLLF). The Cytoplasmic portion of the chain corresponds to 469–497 (TGCCVPETRGRSLEQIEAFFHTRRMSFRP).

This sequence belongs to the major facilitator superfamily. Sugar transporter (TC 2.A.1.1) family. In terms of tissue distribution, mainly expressed in brain and spleen. Also expressed in lung, heart, muscle, liver, kidney, fat, whole blood, testes, ovaries and uterus.

It is found in the lysosome membrane. Functionally, probable sugar transporter that acts as a regulator of glycolysis in macrophages. Does not transport glucose. This is Solute carrier family 2, facilitated glucose transporter member 6 from Mus musculus (Mouse).